The chain runs to 332 residues: DNA double-strand break repair nuclease NurA (332 aa).

Residues Asp-57 and Asp-132 each coordinate Mn(2+).

It belongs to the NurA family. Mn(2+) serves as cofactor.

Involved in DNA double-strand break (DSB) repair. Probably acts with HerA to stimulate resection of the 5' strand and produce the long 3' single-strand that is required for RadA loading. Exhibits both single-stranded endonuclease activity and 5'-3' exonuclease activity on single-stranded and double-stranded DNA. The sequence is that of DNA double-strand break repair nuclease NurA from Sulfolobus acidocaldarius (strain ATCC 33909 / DSM 639 / JCM 8929 / NBRC 15157 / NCIMB 11770).